Consider the following 554-residue polypeptide: Valerianol synthase TPS1F (554 aa).

Mg(2+) is bound by residues aspartate 307 and aspartate 311. A DDXXD motif motif is present at residues 326-330 (VQRWD). Residues aspartate 452, serine 456, and glutamate 460 each coordinate Mg(2+).

The protein belongs to the terpene synthase family. Mg(2+) serves as cofactor.

It catalyses the reaction (2E,6E)-farnesyl diphosphate + H2O = valerianol + diphosphate. The protein operates within secondary metabolite biosynthesis; terpenoid biosynthesis. Its function is as follows. Terpene synthase that catalyzes the biosynthesis of the terpene valerianol, which is a volatile compound of floral scent. The protein is Valerianol synthase TPS1F of Camellia hiemalis (Camellia).